We begin with the raw amino-acid sequence, 214 residues long: C-type lectin domain family 4 member E (214 aa).

Topologically, residues 1–22 (MNSTKSPASHHTERGCFKNSQV) are cytoplasmic. Residues 23–45 (LSWTIAGASILFLSGCFITRCVV) traverse the membrane as a helical; Signal-anchor for type II membrane protein segment. The Extracellular segment spans residues 46–214 (TYRSSQISGQ…CEMPEISPLD (169 aa)). A disulfide bridge connects residues Cys80 and Cys91. The region spanning 87–206 (YQSSCYFFST…CFYSMPWICE (120 aa)) is the C-type lectin domain. An N-linked (GlcNAc...) asparagine glycan is attached at Asn107. 2 disulfide bridges follow: Cys108–Cys205 and Cys179–Cys197. Ca(2+)-binding residues include Val117, Glu123, Glu169, Asn171, Asn193, Asp194, and Glu206. The short motif at 169-171 (EPN) is the Confers specificity for glucose/mannose-type carbohydrates element.

Monomer and homodimer. Interacts with signaling adapter Fc receptor gamma chain/FCER1G to form a functional complex; the interaction is direct. Alternatively, acts as a bridge for interaction between CLEC4D and FCER1G. A heterodimer of CLEC4E and CLEC4D associates with FCER1G to form a functional complex. Interacts with SAP130 nuclear protein that is released from necrotic cells; the interaction is direct. As to expression, highly expressed in macrophages in response to stimulation with bacterial glycolipids and pro-inflammatory cytokines. Expressed in dendritic cells (at protein level) in response to stimulation with mycobacterial trehalose 6,6'-dimycolate (TDM).

The protein resides in the cell membrane. It localises to the cell projection. Its subcellular location is the phagocytic cup. Functionally, calcium-dependent lectin that acts as a pattern recognition receptor (PRR) of the innate immune system: recognizes damage-associated molecular patterns (DAMPs) of abnormal self and pathogen-associated molecular patterns (PAMPs) of bacteria and fungi. The PAMPs notably include mycobacterial trehalose 6,6'-dimycolate (TDM), a cell wall glycolipid with potent adjuvant immunomodulatory functions. Interacts with signaling adapter Fc receptor gamma chain/FCER1G to form a functional complex in myeloid cells. Binding of mycobacterial trehalose 6,6'-dimycolate (TDM) to this receptor complex leads to phosphorylation of the immunoreceptor tyrosine-based activation motif (ITAM) of FCER1G, triggering activation of SYK, CARD9 and NF-kappa-B, consequently driving maturation of antigen-presenting cells and shaping antigen-specific priming of T-cells toward effector T-helper 1 (Th1) and T-helper 17 (Th17) cell subtypes. Also recognizes alpha-mannose residues on pathogenic fungi of the genus Malassezia and mediates macrophage activation. Through recognition of DAMPs released upon nonhomeostatic cell death, enables immune sensing of damaged self and promotes inflammatory cell infiltration into the damaged tissue. This Mus musculus (Mouse) protein is C-type lectin domain family 4 member E.